Consider the following 170-residue polypeptide: Thioredoxin-like protein YneN (170 aa).

The chain crosses the membrane as a helical span at residues 5–23 (WLAGILLIMLVGYTGWNLY). Positions 33–170 (IQEGQQAPDF…KEMEQKLDLD (138 aa)) constitute a Thioredoxin domain. C71 and C74 are oxidised to a cystine.

The protein belongs to the thioredoxin family.

Its subcellular location is the cell membrane. The polypeptide is Thioredoxin-like protein YneN (yneN) (Bacillus subtilis (strain 168)).